Here is a 372-residue protein sequence, read N- to C-terminus: tRNA pseudouridine synthase D (372 aa).

Asp85 acts as the Nucleophile in catalysis. The 171-residue stretch at 160–330 (GFANYFGYQR…MQGSRRFMWG (171 aa)) folds into the TRUD domain.

This sequence belongs to the pseudouridine synthase TruD family.

The catalysed reaction is uridine(13) in tRNA = pseudouridine(13) in tRNA. Responsible for synthesis of pseudouridine from uracil-13 in transfer RNAs. This Campylobacter jejuni subsp. jejuni serotype O:6 (strain 81116 / NCTC 11828) protein is tRNA pseudouridine synthase D.